The primary structure comprises 739 residues: Probable beta-glucosidase L (739 aa).

The N-terminal stretch at 1-17 is a signal peptide; it reads MQNLFLSLLAAAVTVHA. Residue asparagine 224 is glycosylated (N-linked (GlcNAc...) asparagine). Residue aspartate 252 is part of the active site. N-linked (GlcNAc...) asparagine glycosylation is present at asparagine 398.

It belongs to the glycosyl hydrolase 3 family.

It localises to the secreted. The enzyme catalyses Hydrolysis of terminal, non-reducing beta-D-glucosyl residues with release of beta-D-glucose.. The protein operates within glycan metabolism; cellulose degradation. In terms of biological role, beta-glucosidases are one of a number of cellulolytic enzymes involved in the degradation of cellulosic biomass. Catalyzes the last step releasing glucose from the inhibitory cellobiose. The polypeptide is Probable beta-glucosidase L (bglL) (Neosartorya fischeri (strain ATCC 1020 / DSM 3700 / CBS 544.65 / FGSC A1164 / JCM 1740 / NRRL 181 / WB 181) (Aspergillus fischerianus)).